The sequence spans 257 residues: MVLIRVLANLLILQLSYAQKSSELVVGGHPCNINEHRFLVLVYSDGIQCGGTLINKEWMLTAAHCDGKKMKLQFGLHSKNVPNKDKQTRVPKKKYFFPCSKNFTKWDKDIMLIRLNHPVNNSTHIAPLSLPSKPPSQDTVCNIMGWGTISPTKEIYPDVPHCANINIVDHAVCRAFYPGLLEKSKTLCAGILEGGKDTCQGDSGGPLICNGQIQGIVSVGGDPCAEPRVPALYTKVFDHLDWIKSIIAGNTAATCPL.

Positions 1 to 18 (MVLIRVLANLLILQLSYA) are cleaved as a signal peptide. Residues 19-24 (QKSSEL) constitute a propeptide that is removed on maturation. A Peptidase S1 domain is found at 25-248 (VVGGHPCNIN…HLDWIKSIIA (224 aa)). 5 disulfides stabilise this stretch: Cys31–Cys162, Cys49–Cys65, Cys141–Cys209, Cys173–Cys188, and Cys199–Cys224. The active-site Charge relay system is the His64. A glycan (N-linked (GlcNAc...) asparagine) is linked at Asn102. Asp109 acts as the Charge relay system in catalysis. N-linked (GlcNAc...) asparagine glycans are attached at residues Asn120 and Asn121. The active-site Charge relay system is Ser203.

Belongs to the peptidase S1 family. Snake venom subfamily. As to quaternary structure, monomer. Expressed by the venom gland.

The protein resides in the secreted. Snake venom serine protease that may act in the hemostasis system of the prey. The polypeptide is Snake venom serine protease KN1 (Trimeresurus stejnegeri (Chinese green tree viper)).